The primary structure comprises 430 residues: Serine--tRNA ligase (430 aa).

Residue 237 to 239 (TAE) coordinates L-serine. 268-270 (RSE) lines the ATP pocket. E291 lines the L-serine pocket. 355–358 (EISS) contacts ATP. S391 is an L-serine binding site.

It belongs to the class-II aminoacyl-tRNA synthetase family. Type-1 seryl-tRNA synthetase subfamily. As to quaternary structure, homodimer. The tRNA molecule binds across the dimer.

The protein resides in the cytoplasm. It carries out the reaction tRNA(Ser) + L-serine + ATP = L-seryl-tRNA(Ser) + AMP + diphosphate + H(+). The enzyme catalyses tRNA(Sec) + L-serine + ATP = L-seryl-tRNA(Sec) + AMP + diphosphate + H(+). It participates in aminoacyl-tRNA biosynthesis; selenocysteinyl-tRNA(Sec) biosynthesis; L-seryl-tRNA(Sec) from L-serine and tRNA(Sec): step 1/1. Functionally, catalyzes the attachment of serine to tRNA(Ser). Is also able to aminoacylate tRNA(Sec) with serine, to form the misacylated tRNA L-seryl-tRNA(Sec), which will be further converted into selenocysteinyl-tRNA(Sec). This chain is Serine--tRNA ligase, found in Enterobacter sp. (strain 638).